A 430-amino-acid polypeptide reads, in one-letter code: tRNA(Ile)-lysidine synthase (430 aa).

21 to 26 (SGGLDS) contributes to the ATP binding site.

This sequence belongs to the tRNA(Ile)-lysidine synthase family.

The protein localises to the cytoplasm. It catalyses the reaction cytidine(34) in tRNA(Ile2) + L-lysine + ATP = lysidine(34) in tRNA(Ile2) + AMP + diphosphate + H(+). Ligates lysine onto the cytidine present at position 34 of the AUA codon-specific tRNA(Ile) that contains the anticodon CAU, in an ATP-dependent manner. Cytidine is converted to lysidine, thus changing the amino acid specificity of the tRNA from methionine to isoleucine. The chain is tRNA(Ile)-lysidine synthase from Salmonella choleraesuis (strain SC-B67).